The primary structure comprises 448 residues: Proline-rich protein 4 (448 aa).

An N-terminal signal peptide occupies residues 1–29 (MRILPEPRGSVPCLLLLVSVLLSATLSLA). 46 tandem repeats follow at residues 152–156 (PMPKL), 157–161 (PPFKG), 165–169 (PFPLP), 170–174 (PPLEL), 175–179 (PPFLK), 183–187 (PPKYS), 188–193 (PPVEVP), 194–198 (PPVPV), 201–205 (PPPKK), 208–212 (PPPVP), 216–220 (PPPKK), 222–226 (VPPPV), 227–231 (PVYKP), 232–236 (PPKVE), 238–242 (PPPIP), 245–249 (PCPPK), 250–254 (PPKIE), 256–259 (PPPV), 260–264 (PVYKP), 265–270 (PPKIEK), 271–278 (PPPVPVYK), 279–284 (PPPKIE), 286–294 (PPPVPVHKL), 295–299 (PKKPC), 300–304 (PPKKV), 306–311 (PPPVPV), 314–320 (PPTKKPC), 321–327 (PPKKVDP), 328–334 (PPVPVHK), 335–341 (PPPKIVI), 342–348 (PPPKIEH), 349–356 (PPPVPVYK), 357–363 (PPPKIEH), 364–368 (PPIYI), 369–374 (PPIVKK), 378–384 (PPVPIYK), 385–389 (PPVVI), 390–394 (PKKPC), 395–402 (PPPVPVYK), 403–407 (PPVVV), 409–413 (PKKPC), 414–419 (PPLPQL), 420–424 (PPLPK), 425–429 (FPPLP), 430–434 (PKYIH), and 442–446 (PPLPP). The segment at 152–446 (PMPKLPPFKG…KFGKWPPLPP (295 aa)) is 46 X 5 AA approximate repeats. Residues 240–290 (PIPKKPCPPKPPKIEHPPPVPVYKPPPKIEKPPPVPVYKPPPKIEHPPPVP) show a composition bias toward pro residues. The tract at residues 240 to 345 (PIPKKPCPPK…PPKIVIPPPK (106 aa)) is disordered. Pro residues-rich tracts occupy residues 306-319 (PPPVPVHKPPTKKP) and 327-345 (PPPVPVHKPPPKIVIPPPK).

This sequence belongs to the plant proline-rich protein superfamily. In terms of tissue distribution, mostly expressed in aerial organs, particularly in expanding leaves, stems, flowers, and siliques. Also present in stipules.

Its subcellular location is the secreted. It is found in the cell wall. This Arabidopsis thaliana (Mouse-ear cress) protein is Proline-rich protein 4 (PRP4).